Reading from the N-terminus, the 257-residue chain is tRNA-cytidine(32) 2-sulfurtransferase (257 aa).

The PP-loop motif motif lies at 37 to 42; sequence SGGKDS. [4Fe-4S] cluster-binding residues include Cys112, Cys115, and Cys202.

This sequence belongs to the TtcA family. Homodimer. Mg(2+) is required as a cofactor. Requires [4Fe-4S] cluster as cofactor.

It is found in the cytoplasm. The catalysed reaction is cytidine(32) in tRNA + S-sulfanyl-L-cysteinyl-[cysteine desulfurase] + AH2 + ATP = 2-thiocytidine(32) in tRNA + L-cysteinyl-[cysteine desulfurase] + A + AMP + diphosphate + H(+). Its pathway is tRNA modification. Its function is as follows. Catalyzes the ATP-dependent 2-thiolation of cytidine in position 32 of tRNA, to form 2-thiocytidine (s(2)C32). The sulfur atoms are provided by the cysteine/cysteine desulfurase (IscS) system. In Geobacter sulfurreducens (strain ATCC 51573 / DSM 12127 / PCA), this protein is tRNA-cytidine(32) 2-sulfurtransferase.